The following is a 160-amino-acid chain: Eukaryotic translation initiation factor 5A (160 aa).

Over residues 1–13 (MSDSEEHHFESKA) the composition is skewed to basic and acidic residues. Residues 1-22 (MSDSEEHHFESKADAGASKTYP) are disordered. A Hypusine modification is found at lysine 53.

Belongs to the eIF-5A family. In terms of processing, lys-53 undergoes hypusination, a unique post-translational modification that consists in the addition of a butylamino group from spermidine to lysine side chain, leading to the formation of the unusual amino acid hypusine. eIF-5As are the only known proteins to undergo this modification, which is essential for their function.

Its function is as follows. Translation factor that promotes translation elongation and termination, particularly upon ribosome stalling at specific amino acid sequence contexts. Binds between the exit (E) and peptidyl (P) site of the ribosome and promotes rescue of stalled ribosome: specifically required for efficient translation of polyproline-containing peptides as well as other motifs that stall the ribosome. Acts as a ribosome quality control (RQC) cofactor by joining the RQC complex to facilitate peptidyl transfer during CAT tailing step. This Zea mays (Maize) protein is Eukaryotic translation initiation factor 5A (TIF5A).